The sequence spans 143 residues: Peptide methionine sulfoxide reductase MsrB (143 aa).

Residues 16–139 form the MsrB domain; it reads DAELRRRLTP…NSAALNFESR (124 aa). 4 residues coordinate Zn(2+): Cys-55, Cys-58, Cys-104, and Cys-107. Cys-128 functions as the Nucleophile in the catalytic mechanism.

It belongs to the MsrB Met sulfoxide reductase family. Zn(2+) is required as a cofactor.

The enzyme catalyses L-methionyl-[protein] + [thioredoxin]-disulfide + H2O = L-methionyl-(R)-S-oxide-[protein] + [thioredoxin]-dithiol. The protein is Peptide methionine sulfoxide reductase MsrB of Burkholderia cenocepacia (strain HI2424).